The following is a 399-amino-acid chain: Elongation factor Tu (399 aa).

Positions 10 to 208 (KPHVNIGTIG…TVDSYIPEPE (199 aa)) constitute a tr-type G domain. Residues 19–26 (GHVDHGKT) are G1. 19–26 (GHVDHGKT) is a GTP binding site. Threonine 26 is a binding site for Mg(2+). Residues 64–68 (GITIN) form a G2 region. Residues 85–88 (DAPG) form a G3 region. GTP contacts are provided by residues 85 to 89 (DAPGH) and 140 to 143 (NKVD). A G4 region spans residues 140 to 143 (NKVD). The interval 178–180 (SAL) is G5.

It belongs to the TRAFAC class translation factor GTPase superfamily. Classic translation factor GTPase family. EF-Tu/EF-1A subfamily. In terms of assembly, monomer.

The protein localises to the cytoplasm. The enzyme catalyses GTP + H2O = GDP + phosphate + H(+). Functionally, GTP hydrolase that promotes the GTP-dependent binding of aminoacyl-tRNA to the A-site of ribosomes during protein biosynthesis. The protein is Elongation factor Tu of Streptococcus pyogenes serotype M12 (strain MGAS2096).